The following is a 315-amino-acid chain: Probable cell division protein WhiA (315 aa).

A DNA-binding region (H-T-H motif) is located at residues 277–311 (SLQELGAMMPSGQISKSGVNHRLRKLNQIAEGYQQ).

It belongs to the WhiA family.

In terms of biological role, involved in cell division and chromosome segregation. This Lacticaseibacillus paracasei (strain ATCC 334 / BCRC 17002 / CCUG 31169 / CIP 107868 / KCTC 3260 / NRRL B-441) (Lactobacillus paracasei) protein is Probable cell division protein WhiA.